A 315-amino-acid polypeptide reads, in one-letter code: Cysteine proteinase 1 (315 aa).

An N-terminal signal peptide occupies residues 1-13; sequence MFTFILMFYIGYG. Positions 14–93 are cleaved as a propeptide — activation peptide; the sequence is IDFNTWVANN…KGEVRYLNIQ (80 aa). Intrachain disulfides connect C115–C161 and C152–C193. C118 is a catalytic residue. Residues H259 and N279 contribute to the active site.

Belongs to the peptidase C1 family.

The protein localises to the lysosome. Its activity is regulated as follows. Inhibited by cysteine protease inhibitors ICP1 and ICP2. Cysteine protease which degrades matrix proteins such as collagen, laminin and fibronectin and thus is involved in the destruction of human tissue. Can abolish adhesion. May play an important role in pathogenicity. The sequence is that of Cysteine proteinase 1 from Entamoeba histolytica (strain ATCC 30459 / HM-1:IMSS / ABRM).